A 114-amino-acid chain; its full sequence is Hydrogenase maturation factor HypA (114 aa).

Histidine 2 is a binding site for Ni(2+). 4 residues coordinate Zn(2+): cysteine 70, cysteine 73, cysteine 86, and cysteine 89.

This sequence belongs to the HypA/HybF family.

Its function is as follows. Involved in the maturation of [NiFe] hydrogenases. Required for nickel insertion into the metal center of the hydrogenase. The polypeptide is Hydrogenase maturation factor HypA (Crocosphaera subtropica (strain ATCC 51142 / BH68) (Cyanothece sp. (strain ATCC 51142))).